A 339-amino-acid chain; its full sequence is Ketol-acid reductoisomerase (NADP(+)) (339 aa).

The 182-residue stretch at 1-182 (MRVYYDRDAD…GGGRSGIIET (182 aa)) folds into the KARI N-terminal Rossmann domain. Residues 24–27 (YGSQ), Lys48, Ser51, Thr53, and 83–86 (DELQ) contribute to the NADP(+) site. The active site involves His108. An NADP(+)-binding site is contributed by Gly134. The KARI C-terminal knotted domain maps to 183-328 (NFKEECETDL…AKLRGMMPWI (146 aa)). Residues Asp191, Glu195, Glu227, and Glu231 each coordinate Mg(2+). Ser252 serves as a coordination point for substrate.

It belongs to the ketol-acid reductoisomerase family. Requires Mg(2+) as cofactor.

It carries out the reaction (2R)-2,3-dihydroxy-3-methylbutanoate + NADP(+) = (2S)-2-acetolactate + NADPH + H(+). The catalysed reaction is (2R,3R)-2,3-dihydroxy-3-methylpentanoate + NADP(+) = (S)-2-ethyl-2-hydroxy-3-oxobutanoate + NADPH + H(+). Its pathway is amino-acid biosynthesis; L-isoleucine biosynthesis; L-isoleucine from 2-oxobutanoate: step 2/4. It participates in amino-acid biosynthesis; L-valine biosynthesis; L-valine from pyruvate: step 2/4. Involved in the biosynthesis of branched-chain amino acids (BCAA). Catalyzes an alkyl-migration followed by a ketol-acid reduction of (S)-2-acetolactate (S2AL) to yield (R)-2,3-dihydroxy-isovalerate. In the isomerase reaction, S2AL is rearranged via a Mg-dependent methyl migration to produce 3-hydroxy-3-methyl-2-ketobutyrate (HMKB). In the reductase reaction, this 2-ketoacid undergoes a metal-dependent reduction by NADPH to yield (R)-2,3-dihydroxy-isovalerate. This chain is Ketol-acid reductoisomerase (NADP(+)), found in Sinorhizobium medicae (strain WSM419) (Ensifer medicae).